The chain runs to 333 residues: Porphobilinogen deaminase (333 aa).

Cys255 bears the S-(dipyrrolylmethanemethyl)cysteine mark.

Belongs to the HMBS family. As to quaternary structure, monomer. It depends on dipyrromethane as a cofactor.

It carries out the reaction 4 porphobilinogen + H2O = hydroxymethylbilane + 4 NH4(+). It functions in the pathway porphyrin-containing compound metabolism; protoporphyrin-IX biosynthesis; coproporphyrinogen-III from 5-aminolevulinate: step 2/4. Functionally, tetrapolymerization of the monopyrrole PBG into the hydroxymethylbilane pre-uroporphyrinogen in several discrete steps. The chain is Porphobilinogen deaminase from Burkholderia vietnamiensis (strain G4 / LMG 22486) (Burkholderia cepacia (strain R1808)).